The primary structure comprises 77 residues: UPF0346 protein LMOf2365_1885 (77 aa).

This sequence belongs to the UPF0346 family.

This is UPF0346 protein LMOf2365_1885 from Listeria monocytogenes serotype 4b (strain F2365).